Reading from the N-terminus, the 249-residue chain is NAD kinase (249 aa).

The active-site Proton acceptor is Asp-45. NAD(+) is bound by residues 45–46 (DG), Arg-50, 110–111 (NE), Asp-138, and 149–154 (SGWGMS).

It belongs to the NAD kinase family. It depends on a divalent metal cation as a cofactor.

It is found in the cytoplasm. The catalysed reaction is NAD(+) + ATP = ADP + NADP(+) + H(+). Its function is as follows. Involved in the regulation of the intracellular balance of NAD and NADP, and is a key enzyme in the biosynthesis of NADP. Catalyzes specifically the phosphorylation on 2'-hydroxyl of the adenosine moiety of NAD to yield NADP. The sequence is that of NAD kinase from Saccharolobus islandicus (strain Y.N.15.51 / Yellowstone #2) (Sulfolobus islandicus).